Reading from the N-terminus, the 176-residue chain is MKFLFDLFPIILFFVAFKVWGIFTATAVAIVATLAQVAWVAFRHRKVDTMLWVSLGVIVVFGGATLVLHDEKFIQWKPTVLYWLFAIGLLAARYAFGKNLIEKMMGKQLTLPVPVWDKLNVAWALFFAVLGVANLYVVHNFTESQWVNFKLFGTTGAMVVFIILQSLWLTKYLKDE.

6 helical membrane passes run 3–23, 24–44, 49–69, 72–92, 121–141, and 149–169; these read FLFDLFPIILFFVAFKVWGIF, TATAVAIVATLAQVAWVAFRH, TMLWVSLGVIVVFGGATLVLH, KFIQWKPTVLYWLFAIGLLAA, VAWALFFAVLGVANLYVVHNF, and FKLFGTTGAMVVFIILQSLWL.

It belongs to the YciB family.

The protein localises to the cell inner membrane. Functionally, plays a role in cell envelope biogenesis, maintenance of cell envelope integrity and membrane homeostasis. This chain is Inner membrane-spanning protein YciB, found in Burkholderia orbicola (strain MC0-3).